Consider the following 237-residue polypeptide: DNA repair protein RecO (237 aa).

Belongs to the RecO family.

In terms of biological role, involved in DNA repair and RecF pathway recombination. This is DNA repair protein RecO from Rickettsia conorii (strain ATCC VR-613 / Malish 7).